The following is a 140-amino-acid chain: Small ribosomal subunit protein uS12 (140 aa).

Asp-102 carries the 3-methylthioaspartic acid modification.

Belongs to the universal ribosomal protein uS12 family. In terms of assembly, part of the 30S ribosomal subunit. Contacts proteins S8 and S17. May interact with IF1 in the 30S initiation complex.

With S4 and S5 plays an important role in translational accuracy. Its function is as follows. Interacts with and stabilizes bases of the 16S rRNA that are involved in tRNA selection in the A site and with the mRNA backbone. Located at the interface of the 30S and 50S subunits, it traverses the body of the 30S subunit contacting proteins on the other side and probably holding the rRNA structure together. The combined cluster of proteins S8, S12 and S17 appears to hold together the shoulder and platform of the 30S subunit. This Bacillus cytotoxicus (strain DSM 22905 / CIP 110041 / 391-98 / NVH 391-98) protein is Small ribosomal subunit protein uS12.